The following is a 225-amino-acid chain: Polyadenylate-binding protein 2 (225 aa).

The segment covering 1–36 (MADEDISLNEDQLLESMEETNGEQETEIVTETEEEG) has biased composition (acidic residues). A disordered region spans residues 1–42 (MADEDISLNEDQLLESMEETNGEQETEIVTETEEEGSMQIDP). A coiled-coil region spans residues 14–74 (LESMEETNGE…QSEVDKQMAG (61 aa)). The RRM domain maps to 96-173 (RSVYVGNVDY…RQIKVMSKRT (78 aa)).

The protein localises to the nucleus. It is found in the cytoplasm. In terms of biological role, involved in the 3'-end formation of mRNA precursors (pre-mRNA) by the addition of a poly(A) tail of 200-250 nt to the upstream cleavage product. Stimulates poly(A) polymerase (PAPOLA) conferring processivity on the poly(A) tail elongation reaction and also controls the poly(A) tail length. Increases the affinity of poly(A) polymerase for RNA. Binds to poly(A) and to poly(G) with high affinity. May protect the poly(A) tail from degradation. The protein is Polyadenylate-binding protein 2 of Drosophila pseudoobscura pseudoobscura (Fruit fly).